Reading from the N-terminus, the 234-residue chain is uncharacterized protein (234 aa).

4 LRR repeats span residues 44 to 63 (LEFLSKINGGLTSISDLPKL), 64 to 84 (KLRKLELRVSGGLEVLAEKCP), 85 to 107 (NLTHLYLSGNKIKDLSTIEPLKQ), and 111 to 134 (LKSLDLFNCEVTNLNDYGENVFKL). A disordered region spans residues 161-234 (EGLDDEEEGE…GEEERGQKRK (74 aa)). The segment covering 163-226 (LDDEEEGEHE…GEEDEEELGE (64 aa)) has biased composition (acidic residues).

The protein belongs to the ANP32 family. Expressed in activated stem cells, such as mobilized CD34+ cells and cord blood CD34+ cells, but not in resting bone marrow CD34+ cells. Expressed in a variety of neoplastic cell lines, mainly in prostatic adenocarcinoma cell lines. Not expressed in normal prostatic tissue.

This is an uncharacterized protein from Homo sapiens (Human).